We begin with the raw amino-acid sequence, 69 residues long: Small ribosomal subunit protein bS21 (69 aa).

This sequence belongs to the bacterial ribosomal protein bS21 family.

The protein is Small ribosomal subunit protein bS21 of Borrelia duttonii (strain Ly).